The sequence spans 444 residues: uncharacterized protein (444 aa).

A run of 12 helical transmembrane segments spans residues 2-22, 24-44, 52-72, 106-126, 134-154, 174-194, 228-248, 261-281, 305-325, 343-363, 377-397, and 424-444; these read PILI…KVKL, TFVS…MDIN, TGIG…AMLG, FIIG…PIVY, MPFL…HGFL, VLLF…PLFN, FAIS…ATIF, IIEF…LALY, IAMM…LIDG, LFVA…ATVA, AGSV…VIAC, and LLTT…GLVM.

Belongs to the GntP permease family.

The protein resides in the cell membrane. This is an uncharacterized protein from Bacillus subtilis (strain 168).